Reading from the N-terminus, the 201-residue chain is tRNA (guanine-N(7)-)-methyltransferase (201 aa).

Residues E34, E59, D86, and D107 each coordinate S-adenosyl-L-methionine. The active site involves D107. Substrate contacts are provided by residues K111, D143, and 181-184; that span reads TDYE.

Belongs to the class I-like SAM-binding methyltransferase superfamily. TrmB family.

It carries out the reaction guanosine(46) in tRNA + S-adenosyl-L-methionine = N(7)-methylguanosine(46) in tRNA + S-adenosyl-L-homocysteine. Its pathway is tRNA modification; N(7)-methylguanine-tRNA biosynthesis. Functionally, catalyzes the formation of N(7)-methylguanine at position 46 (m7G46) in tRNA. This chain is tRNA (guanine-N(7)-)-methyltransferase, found in Mycoplasma mobile (strain ATCC 43663 / 163K / NCTC 11711) (Mesomycoplasma mobile).